The chain runs to 410 residues: NADH-quinone oxidoreductase subunit D (410 aa).

It belongs to the complex I 49 kDa subunit family. In terms of assembly, NDH-1 is composed of 14 different subunits. Subunits NuoB, C, D, E, F, and G constitute the peripheral sector of the complex.

The protein localises to the cell inner membrane. The catalysed reaction is a quinone + NADH + 5 H(+)(in) = a quinol + NAD(+) + 4 H(+)(out). Functionally, NDH-1 shuttles electrons from NADH, via FMN and iron-sulfur (Fe-S) centers, to quinones in the respiratory chain. The immediate electron acceptor for the enzyme in this species is believed to be ubiquinone. Couples the redox reaction to proton translocation (for every two electrons transferred, four hydrogen ions are translocated across the cytoplasmic membrane), and thus conserves the redox energy in a proton gradient. The chain is NADH-quinone oxidoreductase subunit D from Nitratiruptor sp. (strain SB155-2).